A 91-amino-acid chain; its full sequence is Peptide Ctry2146 (91 aa).

The signal sequence occupies residues 1–23 (MKTQTLLVTFLVVLLMVATQTEA). Leu-33 is modified (leucine amide). Residues 37–91 (GLLDGLLGKRGLLFGKRGPLFGKRALTNQDFLDFAYDPSLSAADMDALEMLFEDY) constitute a propeptide that is removed on maturation.

This sequence belongs to the non-disulfide-bridged peptide (NDBP) superfamily. Short antimicrobial peptide (group 4) family. As to expression, expressed by the venom gland.

It localises to the secreted. Its subcellular location is the target cell membrane. In terms of biological role, antimicrobial peptide. This is Peptide Ctry2146 from Chaerilus tryznai (Scorpion).